The primary structure comprises 364 residues: Dihydroorotate dehydrogenase (quinone) (364 aa).

Residues 61–65 (AGFDK) and Thr-85 contribute to the FMN site. Residue Lys-65 participates in substrate binding. 110–114 (NRMGF) lines the substrate pocket. The FMN site is built by Asn-139 and Asn-170. Asn-170 is a substrate binding site. The Nucleophile role is filled by Ser-173. Asn-175 contacts substrate. Lys-214 and Ala-242 together coordinate FMN. Residue 243–244 (NT) coordinates substrate. FMN-binding positions include Gly-266, Gly-295, and 316–317 (YS).

Belongs to the dihydroorotate dehydrogenase family. Type 2 subfamily. As to quaternary structure, monomer. FMN is required as a cofactor.

The protein localises to the cell membrane. The catalysed reaction is (S)-dihydroorotate + a quinone = orotate + a quinol. Its pathway is pyrimidine metabolism; UMP biosynthesis via de novo pathway; orotate from (S)-dihydroorotate (quinone route): step 1/1. Its function is as follows. Catalyzes the conversion of dihydroorotate to orotate with quinone as electron acceptor. The sequence is that of Dihydroorotate dehydrogenase (quinone) from Rhodopseudomonas palustris (strain HaA2).